The chain runs to 385 residues: Protein pelota homolog (385 aa).

A Glycyl lysine isopeptide (Lys-Gly) (interchain with G-Cter in SUMO2) cross-link involves residue Lys-162. A phosphoserine mark is found at Ser-374, Ser-380, Ser-381, and Ser-382.

The protein belongs to the eukaryotic release factor 1 family. Pelota subfamily. As to quaternary structure, component of the Pelota-HBS1L complex, also named Dom34-Hbs1 complex, composed of PELO and HBS1L. Interacts with PINK1. Interacts with ABCE1. Interacts with CNOT4. The cofactor is a divalent metal cation.

Its subcellular location is the cytoplasm. Its function is as follows. Component of the Pelota-HBS1L complex, a complex that recognizes stalled ribosomes and triggers the No-Go Decay (NGD) pathway. In the Pelota-HBS1L complex, PELO recognizes ribosomes stalled at the 3' end of an mRNA and engages stalled ribosomes by destabilizing mRNA in the mRNA channel. Following mRNA extraction from stalled ribosomes by the SKI complex, the Pelota-HBS1L complex promotes recruitment of ABCE1, which drives the disassembly of stalled ribosomes, followed by degradation of damaged mRNAs as part of the NGD pathway. As part of the PINK1-regulated signaling, upon mitochondrial damage is recruited to the ribosome/mRNA-ribonucleoprotein complex associated to mitochondrial outer membrane thereby enabling the recruitment of autophagy receptors and induction of mitophagy. This Rattus norvegicus (Rat) protein is Protein pelota homolog (Pelo).